A 311-amino-acid polypeptide reads, in one-letter code: Salutaridine reductase (311 aa).

Residue 17-40 participates in NADP(+) binding; sequence VTGGNKGIGFEICKQLSSSGIMVV. Ser-180 is a substrate binding site. The Proton acceptor role is filled by Tyr-236.

This sequence belongs to the short-chain dehydrogenases/reductases (SDR) family.

The enzyme catalyses (7S)-salutaridinol + NADP(+) = salutaridine + NADPH + H(+). With respect to regulation, subject to substrate inhibition at salutaridine concentrations higher than 20 to 30 uM. Involved in biosynthesis of morphinan-type benzylisoquinoline alkaloids. Catalyzes the stereospecific conversion of salutaridine to salutaridinol. This is Salutaridine reductase from Papaver bracteatum (Great scarlet poppy).